The primary structure comprises 246 residues: DNA repair protein RecO (246 aa).

The protein belongs to the RecO family.

In terms of biological role, involved in DNA repair and RecF pathway recombination. The sequence is that of DNA repair protein RecO from Proteus mirabilis (strain HI4320).